The chain runs to 264 residues: S-adenosylmethionine decarboxylase proenzyme (264 aa).

Serine 112 (schiff-base intermediate with substrate; via pyruvic acid) is an active-site residue. Pyruvic acid (Ser); by autocatalysis is present on serine 112. The active-site Proton acceptor; for processing activity is the histidine 117. Cysteine 140 functions as the Proton donor; for catalytic activity in the catalytic mechanism.

Belongs to the prokaryotic AdoMetDC family. Type 2 subfamily. Heterooctamer of four alpha and four beta chains arranged as a tetramer of alpha/beta heterodimers. The cofactor is pyruvate. In terms of processing, is synthesized initially as an inactive proenzyme. Formation of the active enzyme involves a self-maturation process in which the active site pyruvoyl group is generated from an internal serine residue via an autocatalytic post-translational modification. Two non-identical subunits are generated from the proenzyme in this reaction, and the pyruvate is formed at the N-terminus of the alpha chain, which is derived from the carboxyl end of the proenzyme. The post-translation cleavage follows an unusual pathway, termed non-hydrolytic serinolysis, in which the side chain hydroxyl group of the serine supplies its oxygen atom to form the C-terminus of the beta chain, while the remainder of the serine residue undergoes an oxidative deamination to produce ammonia and the pyruvoyl group blocking the N-terminus of the alpha chain.

It catalyses the reaction S-adenosyl-L-methionine + H(+) = S-adenosyl 3-(methylsulfanyl)propylamine + CO2. Its pathway is amine and polyamine biosynthesis; S-adenosylmethioninamine biosynthesis; S-adenosylmethioninamine from S-adenosyl-L-methionine: step 1/1. In terms of biological role, catalyzes the decarboxylation of S-adenosylmethionine to S-adenosylmethioninamine (dcAdoMet), the propylamine donor required for the synthesis of the polyamines spermine and spermidine from the diamine putrescine. The polypeptide is S-adenosylmethionine decarboxylase proenzyme (Yersinia pseudotuberculosis serotype O:1b (strain IP 31758)).